A 1025-amino-acid polypeptide reads, in one-letter code: DNA ligase 4 (1025 aa).

The segment at 1-36 (MMQPTPAPSSAPGSPQRTQAEPEMETPSYPQPPQNV) is disordered. Residues Glu-289, Lys-291, Leu-292, Arg-296, Glu-349, Phe-387, Glu-447, Lys-452, Lys-469, and Lys-471 each coordinate ATP. Lys-291 (N6-AMP-lysine intermediate) is an active-site residue. Mg(2+) is bound at residue Glu-349. Glu-447 is a Mg(2+) binding site. Residues 667–763 (VKTDIFNGMK…EPAPFKKKYF (97 aa)) form the BRCT 1 domain. Residues 773 to 904 (ADEYNEDDGE…TTPDVDGDVK (132 aa)) are disordered. 2 stretches are compositionally biased toward acidic residues: residues 775 to 785 (EYNEDDGEEEG) and 806 to 816 (SETEDEDEEQA). The segment covering 817 to 838 (PEIKEEQDGELHEWLKVDDRKS) has biased composition (basic and acidic residues). The segment covering 845–870 (DEEDSVTEDDSDNADVADEEEPDLDD) has biased composition (acidic residues). Over residues 891–904 (RHRETTPDVDGDVK) the composition is skewed to basic and acidic residues. The BRCT 2 domain occupies 915 to 1025 (DPDVIFKHLC…TLLDEEEFAP (111 aa)).

Belongs to the ATP-dependent DNA ligase family. Requires Mg(2+) as cofactor.

Its subcellular location is the nucleus. The catalysed reaction is ATP + (deoxyribonucleotide)n-3'-hydroxyl + 5'-phospho-(deoxyribonucleotide)m = (deoxyribonucleotide)n+m + AMP + diphosphate.. DNA ligase involved in DNA non-homologous end joining (NHEJ); required for double-strand break (DSB) repair. The protein is DNA ligase 4 (LIG4) of Coprinopsis cinerea (Inky cap fungus).